Consider the following 2210-residue polypeptide: RNA-directed RNA polymerase L (2210 aa).

The segment at 26 to 284 (RDIFLSQHHP…SHKDSDVPSC (259 aa)) is endonuclease. 3 residues coordinate Mn(2+): glutamate 51, aspartate 89, and glutamate 102. Lysine 115 is a catalytic residue. Residues 1171–1368 (CDMKMAVNNG…FLSSKLNKFI (198 aa)) enclose the RdRp catalytic domain. Aspartate 1329 serves as a coordination point for Mg(2+).

The protein belongs to the Bunyavirales RNA polymerase family. In terms of assembly, homomultimer; the oligomeric structure is essential for the polymerase activity. Interacts with nucleoprotein N. Interacts with protein Z; this interaction inhibits viral transcription and replication, Z partially blocks the product exit tunnel for the releasing nascent RNA product. Mn(2+) serves as cofactor. The cofactor is Mg(2+).

The protein localises to the virion. The protein resides in the host cytoplasm. The enzyme catalyses RNA(n) + a ribonucleoside 5'-triphosphate = RNA(n+1) + diphosphate. Its function is as follows. RNA-dependent RNA polymerase, which is responsible for the replication and transcription of the viral RNA genome using antigenomic RNA as an intermediate. During transcription, synthesizes subgenomic RNAs and assures their capping by a cap-snatching mechanism, which involves the endonuclease activity cleaving the host capped pre-mRNAs. These short capped RNAs are then used as primers for viral transcription. The 3'-end of subgenomic mRNAs molecules are heterogeneous and not polyadenylated. The replicase function is to direct synthesis of antigenomic and genomic RNA which are encapsidated and non capped. As a consequence of the use of the same enzyme for both transcription and replication, these mechanisms need to be well coordinated. These processes may be regulated by proteins N and Z in a dose-dependent manner. Z protein inhibits the viral polymerase L und thus the viral transcription and RNA synthesis. This Junin mammarenavirus (JUNV) protein is RNA-directed RNA polymerase L.